The sequence spans 576 residues: Arginine--tRNA ligase (576 aa).

Residues proline 122–histidine 132 carry the 'HIGH' region motif.

This sequence belongs to the class-I aminoacyl-tRNA synthetase family. Monomer.

The protein resides in the cytoplasm. It carries out the reaction tRNA(Arg) + L-arginine + ATP = L-arginyl-tRNA(Arg) + AMP + diphosphate. This Mannheimia succiniciproducens (strain KCTC 0769BP / MBEL55E) protein is Arginine--tRNA ligase.